The chain runs to 138 residues: Translation initiation factor 5A (138 aa).

The residue at position 37 (Lys37) is a Hypusine.

Belongs to the eIF-5A family.

The protein resides in the cytoplasm. Functionally, functions by promoting the formation of the first peptide bond. The chain is Translation initiation factor 5A from Pyrococcus furiosus (strain ATCC 43587 / DSM 3638 / JCM 8422 / Vc1).